The chain runs to 117 residues: Large ribosomal subunit protein bL20 (117 aa).

This sequence belongs to the bacterial ribosomal protein bL20 family.

Its function is as follows. Binds directly to 23S ribosomal RNA and is necessary for the in vitro assembly process of the 50S ribosomal subunit. It is not involved in the protein synthesizing functions of that subunit. The chain is Large ribosomal subunit protein bL20 from Nitratidesulfovibrio vulgaris (strain DP4) (Desulfovibrio vulgaris).